A 543-amino-acid chain; its full sequence is Telomerase Cajal body protein 1 homolog (543 aa).

The segment at 95–128 is disordered; it reads GRPKNAVESPHAGVPMETSLAAEEEANGDEEEES. The span at 116–127 shows a compositional bias: acidic residues; sequence AEEEANGDEEEE. 3 WD repeats span residues 237–283, 291–329, and 378–421; these read PEGG…LRCS, DEVM…RFCD, and GHKG…QPLV.

This sequence belongs to the TCAB1 family.

Its subcellular location is the nucleus. It localises to the cajal body. In terms of biological role, RNA chaperone that plays a key role in Cajal body formation. Specifically recognizes and binds the Cajal body box (CAB box) present in both small Cajal body RNAs (scaRNAs). Probably acts by mediating localization of scaRNAs to Cajal bodies. The chain is Telomerase Cajal body protein 1 homolog from Drosophila melanogaster (Fruit fly).